The following is a 431-amino-acid chain: Ornithine decarboxylase (431 aa).

The residue at position 94 (lysine 94) is an N6-(pyridoxal phosphate)lysine. Pyridoxal 5'-phosphate is bound by residues serine 226, glycine 264, and 297–300 (EPGR). A substrate-binding site is contributed by 340 to 341 (YD). The active-site Proton donor; shared with dimeric partner is the cysteine 376. Substrate is bound at residue aspartate 377. Tyrosine 405 lines the pyridoxal 5'-phosphate pocket.

This sequence belongs to the Orn/Lys/Arg decarboxylase class-II family. Homodimer. Only the dimer is catalytically active, as the active sites are constructed of residues from both monomers. Requires pyridoxal 5'-phosphate as cofactor.

It catalyses the reaction L-ornithine + H(+) = putrescine + CO2. It functions in the pathway amine and polyamine biosynthesis; putrescine biosynthesis via L-ornithine pathway; putrescine from L-ornithine: step 1/1. Its activity is regulated as follows. Inhibited by antizyme (AZ) in response to polyamine levels. AZ inhibits the assembly of the functional homodimer by binding to ODC monomers and targeting them for ubiquitin-independent proteolytic destruction by the 26S proteasome. Catalyzes the first and rate-limiting step of polyamine biosynthesis that converts ornithine into putrescine, which is the precursor for the polyamines, spermidine and spermine. Polyamines are essential for cell proliferation and are implicated in cellular processes, ranging from DNA replication to apoptosis. The polypeptide is Ornithine decarboxylase (Datura stramonium (Jimsonweed)).